A 597-amino-acid polypeptide reads, in one-letter code: MKRIRQPIIAVLGHVDHGKTTLLDRIRRTNVAGKEAGGITQHIGATEVPIETVKNLAGPLIKLWKGEIKLPGLLFIDTPGHEAFTSLRARGGSLADLAVLVVDINEGFQPQTIESIEILRKNRTPFIVAANKIDRIKGWKIEKDEPFLVNIKKQDQRAQQELETKLWELIGKFYEMGFQANRFDRVQNFTRELAIVPISAKYGIGVPELLVLIAGLSQKYLEEKLKIEVEGPARGTILEVREEIGLGTTIDVIIYDGTLHKDDTIVVGGKDKAIVTKIRALLKPKPLDEIRDPRFRFDQVDEVTAAAGVKIAAPGLEEALAGSPVIAARSEEEVEKAKQEILSQIQSVVISTGKVGVIVKADTLGSLEALSKELQEKNIPIRKADVGNISKTDVMEALSVKDEDPKYGVVLGFNVKVNEDAEEVAKARGVPIFTGNIIYKLIEDYEAWVKGEEEKKKRELLSKVTFPGVIRLYPDERYVFRRSHPAIVGIEVVEGRIRPGVTLIKQNGQKVGVIKSIKNRNDFVQEAKKGEAVAIAIEGAIVGRHIHPGETLYVDLSKNDVIILAKQLKNELDETDIKALKMTAKVKAQQDPFWKAV.

Residues 4–221 (IRQPIIAVLG…LIAGLSQKYL (218 aa)) enclose the tr-type G domain. The tract at residues 13–20 (GHVDHGKT) is G1. 13–20 (GHVDHGKT) contributes to the GTP binding site. The G2 stretch occupies residues 38 to 42 (GITQH). The segment at 77–80 (DTPG) is G3. Residues 77–81 (DTPGH) and 131–134 (NKID) contribute to the GTP site. Positions 131–134 (NKID) are G4. Residues 199–201 (SAK) form a G5 region.

Belongs to the TRAFAC class translation factor GTPase superfamily. Classic translation factor GTPase family. IF-2 subfamily.

Functionally, function in general translation initiation by promoting the binding of the formylmethionine-tRNA to ribosomes. Seems to function along with eIF-2. The chain is Probable translation initiation factor IF-2 from Thermococcus onnurineus (strain NA1).